We begin with the raw amino-acid sequence, 242 residues long: Probable proteasome subunit alpha type-7 (242 aa).

This sequence belongs to the peptidase T1A family. As to quaternary structure, the 26S proteasome consists of a 20S proteasome core and two 19S regulatory subunits. The 20S proteasome core is composed of 28 subunits that are arranged in four stacked rings, resulting in a barrel-shaped structure. The two end rings are each formed by seven alpha subunits, and the two central rings are each formed by seven beta subunits. The catalytic chamber with the active sites is on the inside of the barrel.

The protein resides in the cytoplasm. Its subcellular location is the nucleus. Its function is as follows. The proteasome degrades poly-ubiquitinated proteins in the cytoplasm and in the nucleus. It is essential for the regulated turnover of proteins and for the removal of misfolded proteins. The proteasome is a multicatalytic proteinase complex that is characterized by its ability to cleave peptides with Arg, Phe, Tyr, Leu, and Glu adjacent to the leaving group at neutral or slightly basic pH. It has an ATP-dependent proteolytic activity. This Encephalitozoon cuniculi (strain GB-M1) (Microsporidian parasite) protein is Probable proteasome subunit alpha type-7 (PRE10).